The following is an 809-amino-acid chain: Ferric-pyoverdine BN7/BN8 receptor (809 aa).

The N-terminal stretch at 1-45 (MNHTARKRQGWQRSVSQKLAGAVVQGIACMGASAPLLLMPAWATA) is a signal peptide. Positions 166 to 273 (TPRETPQSLT…PSATINLIRK (108 aa)) constitute a TBDR plug domain. The region spanning 278 to 809 (EAQASITGEA…NVMTSFKYSF (532 aa)) is the TBDR beta-barrel domain. The TonB C-terminal box motif lies at 792–809 (YGVYGTPRNVMTSFKYSF).

It belongs to the TonB-dependent receptor family.

It localises to the cell outer membrane. Specific receptor for the siderophores ferric pyoverdines (pseudobactins) BN8 and BN7, iron chelating molecules that allow the organism to extract iron from the environment, especially under iron-restricted conditions. This Pseudomonas putida (Arthrobacter siderocapsulatus) protein is Ferric-pyoverdine BN7/BN8 receptor (pupB).